The chain runs to 209 residues: Orotate phosphoribosyltransferase (209 aa).

5-phospho-alpha-D-ribose 1-diphosphate is bound by residues R96, K100, H102, and 122 to 130 (EDLISTGGS). Residue S126 participates in orotate binding.

It belongs to the purine/pyrimidine phosphoribosyltransferase family. PyrE subfamily. Homodimer. Mg(2+) serves as cofactor.

It catalyses the reaction orotidine 5'-phosphate + diphosphate = orotate + 5-phospho-alpha-D-ribose 1-diphosphate. The protein operates within pyrimidine metabolism; UMP biosynthesis via de novo pathway; UMP from orotate: step 1/2. Functionally, catalyzes the transfer of a ribosyl phosphate group from 5-phosphoribose 1-diphosphate to orotate, leading to the formation of orotidine monophosphate (OMP). The chain is Orotate phosphoribosyltransferase from Streptococcus thermophilus (strain CNRZ 1066).